Reading from the N-terminus, the 257-residue chain is Septu protein PtuB (257 aa).

Positions 49–96 (CVYCECRLDEESKYMEVEHFLPKDTYPNLVVNWRNLLPSCKRCNGKKG) constitute an HNH domain.

In terms of biological role, component of antiviral defense system Septu type I, composed of PtuA and PtuB. Expression of Septu type I in B.subtilis (strain BEST7003) confers resistance to phages SBSphiC and SBSphiJ. May be a nuclease. This is Septu protein PtuB from Bacillus thuringiensis.